A 217-amino-acid polypeptide reads, in one-letter code: Small ribosomal subunit protein uS3 (217 aa).

A KH type-2 domain is found at 40 to 110 (IRDVINKGFN…EVYINIHEVR (71 aa)).

This sequence belongs to the universal ribosomal protein uS3 family. Part of the 30S ribosomal subunit. Forms a tight complex with proteins S10 and S14.

Its function is as follows. Binds the lower part of the 30S subunit head. Binds mRNA in the 70S ribosome, positioning it for translation. This is Small ribosomal subunit protein uS3 from Rickettsia massiliae (strain Mtu5).